Consider the following 272-residue polypeptide: Probable ribonuclease HI_0526 (272 aa).

The first 23 residues, 1 to 23 (MKKLTSILSLIVLVILAIWQYFT), serve as a signal peptide directing secretion. Residues histidine 148, glutamate 195, and histidine 199 contribute to the active site.

Belongs to the RNase T2 family.

This is Probable ribonuclease HI_0526 from Haemophilus influenzae (strain ATCC 51907 / DSM 11121 / KW20 / Rd).